Here is a 933-residue protein sequence, read N- to C-terminus: Potassium voltage-gated channel subfamily KQT member 5 (933 aa).

Residues 1–126 (MPRHHAGGEE…YNVLERPRGW (126 aa)) lie on the Cytoplasmic side of the membrane. Ser-89 bears the Phosphoserine mark. A helical membrane pass occupies residues 127 to 147 (AFVYHAFVFLLVFGCLILSVF). The Extracellular portion of the chain corresponds to 148 to 157 (STIPEHTKLA). A helical membrane pass occupies residues 158 to 178 (SSCLLILEFVMIVVFGLEFII). Residues 179 to 201 (RIWSAGCCCRYRGWQGRLRFARK) are Cytoplasmic-facing. The chain crosses the membrane as a helical span at residues 202–222 (PFCVIDTIVLIASIAVVSAKT). Residues 223 to 230 (QGNIFATS) lie on the Extracellular side of the membrane. A helical; Voltage-sensor transmembrane segment spans residues 231–253 (ALRSLRFLQILRMVRMDRRGGTW). The a 1,2-diacyl-sn-glycero-3-phospho-(1D-myo-inositol-4,5-bisphosphate) site is built by Arg-249 and Lys-265. Topologically, residues 254–267 (KLLGSVVYAHSKEL) are cytoplasmic. Residues 268–288 (ITAWYIGFLVLIFSSFLVYLV) traverse the membrane as a helical segment. Residues 289–299 (EKDANKEFSTY) are Extracellular-facing. Residues 300 to 320 (ADALWWGTITLTTIGYGDKTP) constitute an intramembrane region (pore-forming). Residues 321–326 (LTWLGR) are Extracellular-facing. Residues 327 to 347 (LLSAGFALLGISFFALPAGIL) form a helical membrane-spanning segment. The Cytoplasmic portion of the chain corresponds to 348–933 (GSGFALKVQE…ALSLPHVKLN (586 aa)). Lys-362 contacts a 1,2-diacyl-sn-glycero-3-phospho-(1D-myo-inositol-4,5-bisphosphate). An interaction with CALM region spans residues 371 to 379 (AANLIQCVW). The segment at 405-465 (SPTKKEQGEA…EGSPTKVQKS (61 aa)) is disordered. Residues 432–441 (RGQSIKSRQA) are compositionally biased toward polar residues. Ser-448 is subject to Phosphoserine. The tract at residues 522 to 529 (VIRAIRIM) is interaction with CALM. Residues 578–598 (KGQMTSDKKSREKITAEHETT) form a disordered region. Residues 583-598 (SDKKSREKITAEHETT) are compositionally biased toward basic and acidic residues. Residue Ser-832 is modified to Phosphoserine. Residues 878-933 (GAEETETDTFDGTPPPAGEAAFSSDSLRTGRSRSSQNICKTGDSTDALSLPHVKLN) are disordered. Positions 900 to 924 (SSDSLRTGRSRSSQNICKTGDSTDA) are enriched in polar residues.

This sequence belongs to the potassium channel family. KQT (TC 1.A.1.15) subfamily. Kv7.5/KCNQ5 sub-subfamily. In terms of assembly, homotetramer; forms a functional homotetrameric channel resulting in the expression of a small M-current. Heterotetramer with KCNQ3; forms heterotetrameric M-channel responsible for the native M-current. Heterotetramer with KCNQ1; forms a functional voltage-gated potassium channel. Interacts (via C-terminus) with calmodulin/CALM; forms a heterooctameric structure (with 4:4 KCNQ1:CALM stoichiometry); the interaction is calcium-independent, constitutive and participates in the channel function. Strongly expressed in brain. Also expressed in colon, lung and uterus.

It is found in the cell membrane. It catalyses the reaction K(+)(in) = K(+)(out). Its activity is regulated as follows. Phosphatidylinositol-4,5-bisphosphate (PIP2) is essential to activate KCNQ5 channel by inducing the coupling of the voltage-sensing domain (VSD) and the pore-forming domain (PD). Calcium suppresses KCNQ5 channel current through calcium-bound CALM C-terminus. Therefore CALM acts as calcium sensor that controls channel activity. Zinc potentiates channel activity in a pH-dependent manner. The activity is modulated by small changes in cell volume. Activated by the anticonvulsant retigabine. Inhibited by linopirdine and XE991. Functionally, pore-forming subunit of the voltage-gated potassium (Kv) channel broadly expressed in brain and skeletal muscle and involved in the regulation of neuronal excitability. Associates with KCNQ3/Kv7.3 pore-forming subunit to form a potassium channel which contributes to M-type current, a slowly activating and deactivating potassium conductance which plays a critical role in determining the subthreshold electrical excitability of neurons. Contributes, with other potassium channels, to the molecular diversity of a heterogeneous population of M-channels, varying in kinetic and pharmacological properties, which underlie this physiologically important current. Also forms a functional channel with KCNQ1/Kv7.1 subunit that may contribute to vasoconstriction and hypertension. Channel may be selectively permeable in vitro to other cations besides potassium, in decreasing order of affinity K(+) = Rb(+) &gt; Cs(+) &gt; Na(+). The protein is Potassium voltage-gated channel subfamily KQT member 5 of Mus musculus (Mouse).